Here is a 691-residue protein sequence, read N- to C-terminus: Elongation factor G (691 aa).

One can recognise a tr-type G domain in the interval 8-282 (EQTRNIGIMA…AVIDYLPAPT (275 aa)). Residues 17–24 (AHIDAGKT), 81–85 (DTPGH), and 135–138 (NKMD) contribute to the GTP site.

This sequence belongs to the TRAFAC class translation factor GTPase superfamily. Classic translation factor GTPase family. EF-G/EF-2 subfamily.

Its subcellular location is the cytoplasm. In terms of biological role, catalyzes the GTP-dependent ribosomal translocation step during translation elongation. During this step, the ribosome changes from the pre-translocational (PRE) to the post-translocational (POST) state as the newly formed A-site-bound peptidyl-tRNA and P-site-bound deacylated tRNA move to the P and E sites, respectively. Catalyzes the coordinated movement of the two tRNA molecules, the mRNA and conformational changes in the ribosome. The protein is Elongation factor G of Natranaerobius thermophilus (strain ATCC BAA-1301 / DSM 18059 / JW/NM-WN-LF).